Here is a 393-residue protein sequence, read N- to C-terminus: Acetylornithine aminotransferase (393 aa).

Pyridoxal 5'-phosphate-binding positions include 100-101 and F132; that span reads GT. Residue R135 coordinates N(2)-acetyl-L-ornithine. Position 217-220 (217-220) interacts with pyridoxal 5'-phosphate; it reads DEIQ. At K246 the chain carries N6-(pyridoxal phosphate)lysine. Residue S275 coordinates N(2)-acetyl-L-ornithine. A pyridoxal 5'-phosphate-binding site is contributed by T276.

The protein belongs to the class-III pyridoxal-phosphate-dependent aminotransferase family. ArgD subfamily. As to quaternary structure, homodimer. The cofactor is pyridoxal 5'-phosphate.

It is found in the cytoplasm. It catalyses the reaction N(2)-acetyl-L-ornithine + 2-oxoglutarate = N-acetyl-L-glutamate 5-semialdehyde + L-glutamate. It functions in the pathway amino-acid biosynthesis; L-arginine biosynthesis; N(2)-acetyl-L-ornithine from L-glutamate: step 4/4. The polypeptide is Acetylornithine aminotransferase (Campylobacter jejuni subsp. jejuni serotype O:2 (strain ATCC 700819 / NCTC 11168)).